Consider the following 83-residue polypeptide: Small cysteine-rich protein 3 (83 aa).

The first 21 residues, 1–21, serve as a signal peptide directing secretion; that stretch reads MGVKLNICLLLLLVAIISSQG. The propeptide occupies 22–39; that stretch reads FNLRKKEDSKDEKPFGNY. Basic and acidic residues predominate over residues 25-35; sequence RKKEDSKDEKP. Positions 25-44 are disordered; the sequence is RKKEDSKDEKPFGNYRRGSP.

It belongs to the Cnidaria small cysteine-rich protein (SCRiP) family. alpha subfamily. In terms of processing, contains 4 disulfide bonds.

It localises to the secreted. It is found in the nematocyst. Its function is as follows. This recombinant protein induces severe neurotoxicity on zebrafish larvae (Danio rerio) at a concentration of 230 mg/ml, but does not show toxicity when injected in blowfly larvae (Sarcophaga falculata). All fish incubated with this protein died within 16 hours of exposure. Has also been claimed to be implied in calcification, but this function seems improbable. This chain is Small cysteine-rich protein 3, found in Acropora millepora (Staghorn coral).